The following is an 852-amino-acid chain: 2-deoxy-glucose resistant protein 2 (852 aa).

Residues 1 to 18 (MFKSKTSTLSYDETPNSN) show a composition bias toward polar residues. The disordered stretch occupies residues 1-60 (MFKSKTSTLSYDETPNSNEGDRNATPVNPKEKSQTKHLNIPGDRSRHSSIADSKRSSSRY). WD repeat units follow at residues 171–210 (LFKNSICCCTFSHDGKYMVIGCKDGSLHLWKVINSPVKRS), 278–316 (EHALDILDANWSKNGFLITASMDKTAKLWHPERKYSLKT), 318–358 (VHPD…VSYA), 426–471 (QHGP…ELFK), 476–515 (GSSRHRGQFLMMKNEPVVFTGSDDHWFYTWKMQSFNLSAE), and 651–689 (GFSSNLSNVVNNVGTILITTDSQGLIRVFRTDILPEIRK). At S716 the chain carries Phosphoserine. A disordered region spans residues 723–748 (DERSSTEDNEFSTTPPSNTHNSRPSH). The segment covering 733-744 (FSTTPPSNTHNS) has biased composition (polar residues).

The protein belongs to the WD repeat DGR2 family.

In Saccharomyces cerevisiae (strain ATCC 204508 / S288c) (Baker's yeast), this protein is 2-deoxy-glucose resistant protein 2 (DGR2).